Here is a 335-residue protein sequence, read N- to C-terminus: Putative serine/threonine-protein kinase 040L (335 aa).

In terms of domain architecture, Protein kinase spans 33-329 (YYYQEFHDEG…DRLTELHHHL (297 aa)). Residues 39 to 47 (HDEGGYGSI) and Lys62 contribute to the ATP site. Asp196 acts as the Proton acceptor in catalysis.

This sequence belongs to the protein kinase superfamily. Ser/Thr protein kinase family.

The sequence is that of Putative serine/threonine-protein kinase 040L from Invertebrate iridescent virus 3 (IIV-3).